The chain runs to 121 residues: UPF0102 protein BF0706 (121 aa).

The protein belongs to the UPF0102 family.

The polypeptide is UPF0102 protein BF0706 (Bacteroides fragilis (strain YCH46)).